The chain runs to 292 residues: tRNA (guanine-N(7)-)-methyltransferase (292 aa).

The tract at residues 1 to 54 (MLKRDQSEMDIEAETANMGKEEKESFVHKRQKYRQEQEEKRLAAKKGVSFEQPE) is disordered. Positions 19-42 (GKEEKESFVHKRQKYRQEQEEKRL) are enriched in basic and acidic residues. S-adenosyl-L-methionine contacts are provided by residues Gly110, 133-134 (EI), 168-169 (NA), and Cys188. Residue Asp191 is part of the active site. Position 266 to 268 (266 to 268 (TEE)) interacts with S-adenosyl-L-methionine.

It belongs to the class I-like SAM-binding methyltransferase superfamily. TrmB family. Forms a complex with TRM82.

It localises to the nucleus. It catalyses the reaction guanosine(46) in tRNA + S-adenosyl-L-methionine = N(7)-methylguanosine(46) in tRNA + S-adenosyl-L-homocysteine. It participates in tRNA modification; N(7)-methylguanine-tRNA biosynthesis. Its function is as follows. Catalyzes the formation of N(7)-methylguanine at position 46 (m7G46) in tRNA. This is tRNA (guanine-N(7)-)-methyltransferase from Yarrowia lipolytica (strain CLIB 122 / E 150) (Yeast).